Here is a 73-residue protein sequence, read N- to C-terminus: Disintegrin trigramin-gamma (73 aa).

Positions 1-73 (EAGEDCDCGS…AGCPRNPLHA (73 aa)) constitute a Disintegrin domain. Disulfide bonds link C6–C21, C8–C16, C15–C38, C29–C35, C34–C59, and C47–C66. The Cell attachment site motif lies at 51–53 (RGD).

This sequence belongs to the venom metalloproteinase (M12B) family. P-II subfamily. P-IIa sub-subfamily. Monomer (disintegrin). As to expression, expressed by the venom gland.

The protein localises to the secreted. Its function is as follows. Inhibits fibrinogen interaction with platelets. Acts by binding to alpha-IIb/beta-3 (ITGA2B/ITGB3) on the platelet surface and inhibits aggregation induced by ADP, thrombin, platelet-activating factor and collagen. This chain is Disintegrin trigramin-gamma, found in Craspedocephalus gramineus (Bamboo pit viper).